The primary structure comprises 492 residues: Thyroid hormone receptor alpha (492 aa).

A disordered region spans residues 1-33 (MEQKPSKVECGSDPEENSARSPDGKRKRKNGQC). Residues 1–52 (MEQKPSKVECGSDPEENSARSPDGKRKRKNGQCPLKSSMSGYIPSYLDKDEQ) form a modulating region. 8 residues coordinate Zn(2+): Cys-53, Cys-56, Cys-70, Cys-73, Cys-91, Cys-97, Cys-107, and Cys-110. 2 NR C4-type zinc fingers span residues 53-73 (CVVC…CEGC) and 91-115 (CKYD…FKKC). The nuclear receptor DNA-binding region spans 53–127 (CVVCGDKATG…VGMAMDLVLD (75 aa)). The 245-residue stretch at 163-407 (EEWDLIHVAT…EGQQLLGMHV (245 aa)) folds into the NR LBD domain. 2 residues coordinate 3,3',5-triiodo-L-thyronine: Arg-228 and Ser-277. Residues 457-492 (AVCGEDDSSEASSLSSSSSDEDTEVFEDLAGKAASP) form a disordered region.

This sequence belongs to the nuclear hormone receptor family. NR1 subfamily. As to quaternary structure, binds DNA as a dimer; homodimer and heterodimer with RXRB. Interacts with NCOA3 and NCOA6 coactivators, leading to a strong increase of transcription of target genes. Probably interacts with SFPQ. Interacts with C1D. Interacts with AKAP13. Interacts with TP53INP2. Interacts with PER2. Isoform alpha-2 and isoform alpha-1 interact with TACC1, but the interaction with alpha-1 is weaker. The interaction with isoform alpha-1, but not alpha-2, is decreased in the presence of thyroid hormone T3.

The protein resides in the nucleus. Its subcellular location is the cytoplasm. Its function is as follows. Nuclear hormone receptor that can act as a repressor or activator of transcription. High affinity receptor for thyroid hormones, including triiodothyronine and thyroxine. This Rattus norvegicus (Rat) protein is Thyroid hormone receptor alpha (Thra).